The primary structure comprises 103 residues: ATP synthase F(0) complex subunit g, mitochondrial (103 aa).

Alanine 2 carries the N-acetylalanine modification. N6-acetyllysine is present on residues lysine 11, lysine 24, lysine 35, and lysine 54.

This sequence belongs to the ATPase g subunit family. As to quaternary structure, component of the ATP synthase complex composed at least of ATP5F1A/subunit alpha, ATP5F1B/subunit beta, ATP5MC1/subunit c (homooctomer), MT-ATP6/subunit a, MT-ATP8/subunit 8, ATP5ME/subunit e, ATP5MF/subunit f, ATP5MG/subunit g, ATP5MK/subunit k, ATP5MJ/subunit j, ATP5F1C/subunit gamma, ATP5F1D/subunit delta, ATP5F1E/subunit epsilon, ATP5PF/subunit F6, ATP5PB/subunit b, ATP5PD/subunit d, ATP5PO/subunit OSCP. ATP synthase complex consists of a soluble F(1) head domain (subunits alpha(3) and beta(3)) - the catalytic core - and a membrane F(0) domain - the membrane proton channel (subunits c, a, 8, e, f, g, k and j). These two domains are linked by a central stalk (subunits gamma, delta, and epsilon) rotating inside the F1 region and a stationary peripheral stalk (subunits F6, b, d, and OSCP).

The protein resides in the mitochondrion. It is found in the mitochondrion inner membrane. Functionally, subunit g, of the mitochondrial membrane ATP synthase complex (F(1)F(0) ATP synthase or Complex V) that produces ATP from ADP in the presence of a proton gradient across the membrane which is generated by electron transport complexes of the respiratory chain. ATP synthase complex consist of a soluble F(1) head domain - the catalytic core - and a membrane F(1) domain - the membrane proton channel. These two domains are linked by a central stalk rotating inside the F(1) region and a stationary peripheral stalk. During catalysis, ATP synthesis in the catalytic domain of F(1) is coupled via a rotary mechanism of the central stalk subunits to proton translocation. In vivo, can only synthesize ATP although its ATP hydrolase activity can be activated artificially in vitro. Part of the complex F(0) domain. This Homo sapiens (Human) protein is ATP synthase F(0) complex subunit g, mitochondrial.